A 122-amino-acid polypeptide reads, in one-letter code: Small ribosomal subunit protein uS13 (122 aa).

The disordered stretch occupies residues 94–122; that stretch reads LSLPVRGQRTKTNSRTRKGKRKTVAGKKK. Over residues 101–122 the composition is skewed to basic residues; sequence QRTKTNSRTRKGKRKTVAGKKK.

It belongs to the universal ribosomal protein uS13 family. Part of the 30S ribosomal subunit. Forms a loose heterodimer with protein S19. Forms two bridges to the 50S subunit in the 70S ribosome.

In terms of biological role, located at the top of the head of the 30S subunit, it contacts several helices of the 16S rRNA. In the 70S ribosome it contacts the 23S rRNA (bridge B1a) and protein L5 of the 50S subunit (bridge B1b), connecting the 2 subunits; these bridges are implicated in subunit movement. Contacts the tRNAs in the A and P-sites. This is Small ribosomal subunit protein uS13 from Chlamydia muridarum (strain MoPn / Nigg).